We begin with the raw amino-acid sequence, 227 residues long: NADH-quinone oxidoreductase subunit C (227 aa).

It belongs to the complex I 30 kDa subunit family. In terms of assembly, NDH-1 is composed of 14 different subunits. Subunits NuoB, C, D, E, F, and G constitute the peripheral sector of the complex.

The protein resides in the cell inner membrane. The catalysed reaction is a quinone + NADH + 5 H(+)(in) = a quinol + NAD(+) + 4 H(+)(out). NDH-1 shuttles electrons from NADH, via FMN and iron-sulfur (Fe-S) centers, to quinones in the respiratory chain. The immediate electron acceptor for the enzyme in this species is believed to be ubiquinone. Couples the redox reaction to proton translocation (for every two electrons transferred, four hydrogen ions are translocated across the cytoplasmic membrane), and thus conserves the redox energy in a proton gradient. This chain is NADH-quinone oxidoreductase subunit C, found in Legionella pneumophila (strain Lens).